We begin with the raw amino-acid sequence, 66 residues long: Protein translocase subunit SecE (66 aa).

A helical membrane pass occupies residues 29–49 (LVASTLVVVVAVFIFSLICLV).

This sequence belongs to the SecE/SEC61-gamma family. Component of the Sec protein translocase complex. Heterotrimer consisting of SecY, SecE and SecG subunits. The heterotrimers can form oligomers, although 1 heterotrimer is thought to be able to translocate proteins. Interacts with the ribosome. Interacts with SecDF, and other proteins may be involved. Interacts with SecA.

Its subcellular location is the cell inner membrane. Functionally, essential subunit of the Sec protein translocation channel SecYEG. Clamps together the 2 halves of SecY. May contact the channel plug during translocation. This is Protein translocase subunit SecE from Rickettsia felis (strain ATCC VR-1525 / URRWXCal2) (Rickettsia azadi).